A 450-amino-acid polypeptide reads, in one-letter code: Tol-Pal system protein TolB (450 aa).

A signal peptide spans Met-1–Gly-37.

The protein belongs to the TolB family. In terms of assembly, the Tol-Pal system is composed of five core proteins: the inner membrane proteins TolA, TolQ and TolR, the periplasmic protein TolB and the outer membrane protein Pal. They form a network linking the inner and outer membranes and the peptidoglycan layer.

The protein localises to the periplasm. Functionally, part of the Tol-Pal system, which plays a role in outer membrane invagination during cell division and is important for maintaining outer membrane integrity. This Nitrobacter winogradskyi (strain ATCC 25391 / DSM 10237 / CIP 104748 / NCIMB 11846 / Nb-255) protein is Tol-Pal system protein TolB.